The following is a 198-amino-acid chain: Nascent polypeptide-associated complex subunit alpha (198 aa).

The region spanning 48–113 (ITRVVLKRTR…QAAAETGSVS (66 aa)) is the NAC-A/B domain. The UBA domain occupies 159–198 (LEDSDIKLVMEQANVSRNKAINGLKKNDSDVVNTIMDLCK).

This sequence belongs to the NAC-alpha family. Part of the nascent polypeptide-associated complex (NAC), consisting of EGD2 and EGD1. NAC associates with ribosomes via EGD1.

The protein localises to the cytoplasm. The protein resides in the nucleus. Functionally, component of the nascent polypeptide-associated complex (NAC), a dynamic component of the ribosomal exit tunnel, protecting the emerging polypeptides from interaction with other cytoplasmic proteins to ensure appropriate nascent protein targeting. The NAC complex also promotes mitochondrial protein import by enhancing productive ribosome interactions with the outer mitochondrial membrane and blocks the inappropriate interaction of ribosomes translating non-secretory nascent polypeptides with translocation sites in the membrane of the endoplasmic reticulum. EGD2 may also be involved in transcription regulation. This Yarrowia lipolytica (strain CLIB 122 / E 150) (Yeast) protein is Nascent polypeptide-associated complex subunit alpha (EGD2).